A 463-amino-acid chain; its full sequence is ATP-dependent protease ATPase subunit HslU (463 aa).

ATP-binding positions include Ile19 and 61-66 (GVGKTE). Positions 154-175 (FGGNQNSNQTSDAQEDDEIEKK) are disordered. Positions 156–165 (GNQNSNQTSD) are enriched in polar residues. The ATP site is built by Asp277, Glu341, and Arg413.

This sequence belongs to the ClpX chaperone family. HslU subfamily. As to quaternary structure, a double ring-shaped homohexamer of HslV is capped on each side by a ring-shaped HslU homohexamer. The assembly of the HslU/HslV complex is dependent on binding of ATP.

The protein resides in the cytoplasm. Functionally, ATPase subunit of a proteasome-like degradation complex; this subunit has chaperone activity. The binding of ATP and its subsequent hydrolysis by HslU are essential for unfolding of protein substrates subsequently hydrolyzed by HslV. HslU recognizes the N-terminal part of its protein substrates and unfolds these before they are guided to HslV for hydrolysis. This Bacillus mycoides (strain KBAB4) (Bacillus weihenstephanensis) protein is ATP-dependent protease ATPase subunit HslU.